We begin with the raw amino-acid sequence, 205 residues long: Melanocortin-2 receptor accessory protein 2 (205 aa).

An N-linked (GlcNAc...) asparagine glycan is attached at Asn9. Residues 45–65 (IVIGFWVGLAVFVIFMFFVLT) form a helical membrane-spanning segment. Ser89 is modified (phosphoserine).

It belongs to the MRAP family. Homodimer and heterodimer. Forms antiparallel homodimers and heterodimers with MRAP. Interacts with MC1R, MC2R, MC3R, MC4R and MC5R. Expressed in the adrenal gland and brain. Not expressed in other tissues.

It localises to the cell membrane. The protein localises to the endoplasmic reticulum membrane. Functionally, modulator of melanocortin receptor 4 (MC4R), a receptor involved in energy homeostasis. Plays a central role in the control of energy homeostasis and body weight regulation by increasing ligand-sensitivity of MC4R and MC4R-mediated generation of cAMP. May also act as a negative regulator of MC2R: competes with MRAP for binding to MC2R and impairs the binding of corticotropin (ACTH) to MC2R. May also regulate activity of other melanocortin receptors (MC1R, MC3R and MC5R); however, additional evidence is required in vivo. This Homo sapiens (Human) protein is Melanocortin-2 receptor accessory protein 2 (MRAP2).